A 196-amino-acid chain; its full sequence is Putative NADH dehydrogenase/NAD(P)H nitroreductase XCV0587 (196 aa).

The protein belongs to the nitroreductase family. HadB/RutE subfamily. FMN is required as a cofactor.

The chain is Putative NADH dehydrogenase/NAD(P)H nitroreductase XCV0587 from Xanthomonas euvesicatoria pv. vesicatoria (strain 85-10) (Xanthomonas campestris pv. vesicatoria).